Here is a 216-residue protein sequence, read N- to C-terminus: LexA repressor (216 aa).

A DNA-binding region (H-T-H motif) is located at residues 29–49; it reads RAEIAQALGFRSPNAAEDHLK. Catalysis depends on for autocatalytic cleavage activity residues Ser-134 and Lys-171.

It belongs to the peptidase S24 family. In terms of assembly, homodimer.

It catalyses the reaction Hydrolysis of Ala-|-Gly bond in repressor LexA.. Represses a number of genes involved in the response to DNA damage (SOS response), including recA and lexA. In the presence of single-stranded DNA, RecA interacts with LexA causing an autocatalytic cleavage which disrupts the DNA-binding part of LexA, leading to derepression of the SOS regulon and eventually DNA repair. This chain is LexA repressor, found in Bordetella parapertussis (strain 12822 / ATCC BAA-587 / NCTC 13253).